A 414-amino-acid polypeptide reads, in one-letter code: CinA-like protein (414 aa).

Belongs to the CinA family.

This chain is CinA-like protein, found in Koribacter versatilis (strain Ellin345).